Reading from the N-terminus, the 442-residue chain is tRNA-2-methylthio-N(6)-dimethylallyladenosine synthase (442 aa).

Residues 2-120 form the MTTase N-terminal domain; it reads KKVFIRTFGC…LPKMIVDKET (119 aa). The [4Fe-4S] cluster site is built by C11, C49, C83, C157, C161, and C164. Residues 143–375 enclose the Radical SAM core domain; sequence RVEGGAAFVS…NEVIEAETAR (233 aa). Residues 378 to 441 form the TRAM domain; that stretch reads QTMIGTVQRC…TFSLRGKVVE (64 aa).

It belongs to the methylthiotransferase family. MiaB subfamily. Monomer. Requires [4Fe-4S] cluster as cofactor.

Its subcellular location is the cytoplasm. The enzyme catalyses N(6)-dimethylallyladenosine(37) in tRNA + (sulfur carrier)-SH + AH2 + 2 S-adenosyl-L-methionine = 2-methylsulfanyl-N(6)-dimethylallyladenosine(37) in tRNA + (sulfur carrier)-H + 5'-deoxyadenosine + L-methionine + A + S-adenosyl-L-homocysteine + 2 H(+). Functionally, catalyzes the methylthiolation of N6-(dimethylallyl)adenosine (i(6)A), leading to the formation of 2-methylthio-N6-(dimethylallyl)adenosine (ms(2)i(6)A) at position 37 in tRNAs that read codons beginning with uridine. The protein is tRNA-2-methylthio-N(6)-dimethylallyladenosine synthase of Neisseria meningitidis serogroup C / serotype 2a (strain ATCC 700532 / DSM 15464 / FAM18).